The chain runs to 511 residues: Putative thymidine phosphorylase (511 aa).

The protein belongs to the thymidine/pyrimidine-nucleoside phosphorylase family. Type 2 subfamily.

It carries out the reaction thymidine + phosphate = 2-deoxy-alpha-D-ribose 1-phosphate + thymine. This is Putative thymidine phosphorylase from Polaromonas sp. (strain JS666 / ATCC BAA-500).